A 471-amino-acid polypeptide reads, in one-letter code: Putative multidrug resistance protein MdtD (471 aa).

The Periplasmic portion of the chain corresponds to 1–11; the sequence is MTDLPDSTRWQ. A helical membrane pass occupies residues 12-32; it reads LWIVAFGFFMQSLDTTIVNTA. Residues 33–48 lie on the Cytoplasmic side of the membrane; the sequence is LPSMAQSLGESPLHMH. A helical membrane pass occupies residues 49–69; sequence MVIVSYVLTVAVMLPASGWLA. The Periplasmic segment spans residues 70–76; the sequence is DKVGVRN. A helical membrane pass occupies residues 77-97; sequence IFFTAIVLFTLGSLFCALSGT. The Cytoplasmic segment spans residues 98–101; that stretch reads LNEL. The chain crosses the membrane as a helical span at residues 102-124; the sequence is LLARALQGVGGAMMVPVGRLTVM. Residues 125-137 are Periplasmic-facing; that stretch reads KIVPREQYMAAMT. Residues 138-158 traverse the membrane as a helical segment; sequence FVTLPGQIGPLLGPALGGLLV. Topologically, residues 159-164 are cytoplasmic; the sequence is EYASWH. A helical transmembrane segment spans residues 165–185; the sequence is WIFLINIPVGIIGAIATLMLM. Residues 186 to 196 lie on the Periplasmic side of the membrane; the sequence is PNYTMQTRRFD. Residues 197–217 traverse the membrane as a helical segment; the sequence is LSGFLLLAVGMAVLTLALDGS. The Cytoplasmic segment spans residues 218–224; that stretch reads KGTGFSP. Residues 225–245 traverse the membrane as a helical segment; it reads LAIAGLVAVGVVALVLYLLHA. Topologically, residues 246 to 262 are periplasmic; the sequence is QNNNRALFSLKLFRTRT. Residues 263–283 form a helical membrane-spanning segment; sequence FSLGLAGSFAGRIGSGMLPFM. Topologically, residues 284–285 are cytoplasmic; sequence TP. A helical transmembrane segment spans residues 286-306; sequence VFLQIGLGFSPFHAGLMMIPM. At 307-341 the chain is on the periplasmic side; sequence VLGSMGMKRIVVQVVNRFGYRWVLVATTLGLSLVT. The helical transmembrane segment at 342-362 threads the bilayer; sequence LLFMTTALLGWYYVLPFVLFL. Residues 363-395 are Cytoplasmic-facing; the sequence is QGMVNSTRFSSMNTLTLKDLPDNLASSGNSLLS. A helical transmembrane segment spans residues 396 to 416; the sequence is MIMQLSMSIGVTIAGLLLGLF. Residues 417–430 are Periplasmic-facing; it reads GSQHVSVDSGTTQT. A helical transmembrane segment spans residues 431–451; that stretch reads VFMYTWLSMAFIIALPAFVFA. Residues 452–471 lie on the Cytoplasmic side of the membrane; sequence RVPSDTHQNVAISRRKRSAQ.

Belongs to the major facilitator superfamily. TCR/Tet family.

The protein localises to the cell inner membrane. This chain is Putative multidrug resistance protein MdtD, found in Escherichia coli O81 (strain ED1a).